The sequence spans 312 residues: MRITIAGAGAMGSRFGLMLHKGGNEVTLIDGWPEHVKAIKEHGLRANYNGEELTAHLSVELQSEISSKEKTDLIILFTKAMQLDKMLQDIKPLIDEHTKVLCLLNGIGHEDTIEKYVSKNNIFIGNTMWTAGLEGPGKAKLFGDGSVELQNLISGEEETAKKLAEILSESGLNAKYSNNIHYSIYRKACVNGTMNGLCTILDTNMAGLGETKPAHDMVVTIVNEFAAVAKFENVNLDIAEVVQHVETCFDPSTIGLHYPSMYQDLIKNNRLTEIDYINGAVSRKGKKYNVATPYCDFLTQLVHSKEELLKAK.

NADP(+) contacts are provided by residues 7-12, N105, and A131; that span reads GAGAMG. Residue N105 coordinates substrate. K187 functions as the Proton donor in the catalytic mechanism. The substrate site is built by N191, N195, and S260. E273 provides a ligand contact to NADP(+).

The protein belongs to the ketopantoate reductase family.

The protein resides in the cytoplasm. The enzyme catalyses (R)-pantoate + NADP(+) = 2-dehydropantoate + NADPH + H(+). It participates in cofactor biosynthesis; (R)-pantothenate biosynthesis; (R)-pantoate from 3-methyl-2-oxobutanoate: step 2/2. Catalyzes the NADPH-dependent reduction of ketopantoate into pantoic acid. The sequence is that of 2-dehydropantoate 2-reductase from Lactococcus lactis subsp. lactis (strain IL1403) (Streptococcus lactis).